The following is a 173-amino-acid chain: Bilin biosynthesis protein PecF (173 aa).

This sequence belongs to the CpcE/RpcE/PecE family.

Functionally, an enzyme involved in the biosynthesis of bilin. The polypeptide is Bilin biosynthesis protein PecF (pecF) (Nostoc sp. (strain PCC 7120 / SAG 25.82 / UTEX 2576)).